We begin with the raw amino-acid sequence, 105 residues long: Translation initiation factor 1A (105 aa).

The S1-like domain maps to 12 to 87; the sequence is TRVRTPREEN…QKCDIIWRYT (76 aa).

This sequence belongs to the eIF-1A family.

In terms of biological role, seems to be required for maximal rate of protein biosynthesis. Enhances ribosome dissociation into subunits and stabilizes the binding of the initiator Met-tRNA(I) to 40 S ribosomal subunits. The protein is Translation initiation factor 1A (eIF1A) of Methanococcus aeolicus (strain ATCC BAA-1280 / DSM 17508 / OCM 812 / Nankai-3).